Reading from the N-terminus, the 536-residue chain is Testis-specific expressed protein 55 (536 aa).

Residues 1 to 11 (MEEPPQEALAE) show a composition bias toward low complexity. 2 disordered regions span residues 1 to 287 (MEEP…PGTS) and 328 to 348 (SNAD…QTDH). Over residues 35–52 (QKNQAERKADNHTAHRIA) the composition is skewed to basic and acidic residues. Polar residues-rich tracts occupy residues 62 to 85 (QAES…STPG) and 105 to 136 (QVNQ…QVSG). Basic and acidic residues-rich tracts occupy residues 138–158 (TEER…ERRT) and 173–222 (RGSR…ERRP). A compositionally biased stretch (low complexity) spans 226 to 242 (IDSGSSVPSDQSPSVQI). Residues 243–255 (DSGSSVPSDQRPS) show a composition bias toward polar residues. The segment covering 339–348 (HYTESDQTDH) has biased composition (basic and acidic residues).

In terms of tissue distribution, testis-specific.

It localises to the nucleus. The protein localises to the cell projection. The protein resides in the cilium. Its subcellular location is the flagellum. This chain is Testis-specific expressed protein 55, found in Homo sapiens (Human).